Reading from the N-terminus, the 167-residue chain is Probable chemoreceptor glutamine deamidase CheD (167 aa).

This sequence belongs to the CheD family.

The enzyme catalyses L-glutaminyl-[protein] + H2O = L-glutamyl-[protein] + NH4(+). Its function is as follows. Probably deamidates glutamine residues to glutamate on methyl-accepting chemotaxis receptors (MCPs), playing an important role in chemotaxis. This chain is Probable chemoreceptor glutamine deamidase CheD, found in Natronomonas pharaonis (strain ATCC 35678 / DSM 2160 / CIP 103997 / JCM 8858 / NBRC 14720 / NCIMB 2260 / Gabara) (Halobacterium pharaonis).